The sequence spans 214 residues: Refilin-B (214 aa).

A disordered region spans residues Met1–Gly56. A phosphoserine mark is found at Ser6 and Ser26.

It belongs to the Refilin family. Interacts with FLNA and FLNB.

Its subcellular location is the cytoplasm. It is found in the cytoskeleton. Its function is as follows. Involved in the regulation of the perinuclear actin network and nuclear shape through interaction with filamins. Plays an essential role in the formation of cartilaginous skeletal elements. This chain is Refilin-B, found in Homo sapiens (Human).